The chain runs to 212 residues: uncharacterized protein (212 aa).

The disordered stretch occupies residues 47–129 (RELLDRRRSQ…GNIDNGQPRR (83 aa)).

This is an uncharacterized protein from Caenorhabditis elegans.